Consider the following 280-residue polypeptide: Urease accessory protein UreD 1 (280 aa).

Belongs to the UreD family. UreD, UreF and UreG form a complex that acts as a GTP-hydrolysis-dependent molecular chaperone, activating the urease apoprotein by helping to assemble the nickel containing metallocenter of UreC. The UreE protein probably delivers the nickel.

The protein localises to the cytoplasm. Its function is as follows. Required for maturation of urease via the functional incorporation of the urease nickel metallocenter. The chain is Urease accessory protein UreD 1 from Brucella canis (strain ATCC 23365 / NCTC 10854 / RM-666).